The sequence spans 527 residues: Peptide chain release factor 3 (527 aa).

The region spanning 9-277 is the tr-type G domain; sequence AKRRTFAIIS…AVVDWAPLPL (269 aa). GTP is bound by residues 18-25, 86-90, and 140-143; these read SHPDAGKT, DTPGH, and NKLD.

This sequence belongs to the TRAFAC class translation factor GTPase superfamily. Classic translation factor GTPase family. PrfC subfamily.

The protein resides in the cytoplasm. Functionally, increases the formation of ribosomal termination complexes and stimulates activities of RF-1 and RF-2. It binds guanine nucleotides and has strong preference for UGA stop codons. It may interact directly with the ribosome. The stimulation of RF-1 and RF-2 is significantly reduced by GTP and GDP, but not by GMP. This Pseudomonas fluorescens (strain ATCC BAA-477 / NRRL B-23932 / Pf-5) protein is Peptide chain release factor 3.